Here is a 347-residue protein sequence, read N- to C-terminus: Nicotinate-nucleotide--dimethylbenzimidazole phosphoribosyltransferase (347 aa).

Catalysis depends on glutamate 316, which acts as the Proton acceptor.

This sequence belongs to the CobT family.

It catalyses the reaction 5,6-dimethylbenzimidazole + nicotinate beta-D-ribonucleotide = alpha-ribazole 5'-phosphate + nicotinate + H(+). Its pathway is nucleoside biosynthesis; alpha-ribazole biosynthesis; alpha-ribazole from 5,6-dimethylbenzimidazole: step 1/2. Catalyzes the synthesis of alpha-ribazole-5'-phosphate from nicotinate mononucleotide (NAMN) and 5,6-dimethylbenzimidazole (DMB). This chain is Nicotinate-nucleotide--dimethylbenzimidazole phosphoribosyltransferase, found in Vibrio parahaemolyticus serotype O3:K6 (strain RIMD 2210633).